A 261-amino-acid chain; its full sequence is uncharacterized protein (261 aa).

A signal peptide spans 1 to 22 (MRDSKRVVLYISIIVLSIFIIG). Residue Cys-23 is the site of N-palmitoyl cysteine attachment. A lipid anchor (S-diacylglycerol cysteine) is attached at Cys-23.

This sequence belongs to the staphylococcal tandem lipoprotein family.

The protein localises to the cell membrane. This is an uncharacterized protein from Staphylococcus aureus (strain Mu50 / ATCC 700699).